The primary structure comprises 212 residues: MGKIWSKSSLVGWPEIRERMRRQTQEPAVEPAVGAGAASQDLANRGAITIRNTRDNNESIAWLEAQEEEEEVGFPVRPQVPLRPITYKQAFDLSFFLKDKGGLEGLVWSRKRQDILDLWMYHTQGILPDWHNYTPGPGIRYPVTFGWCFKLVPLSAEEVEEANEGDNNALLHPICQHGADDDHKEVLVWRFDSSLARRHVARELHPEFYKNC.

Gly2 carries the N-myristoyl glycine; by host lipid modification. At Ser6 the chain carries Phosphoserine; by host. The tract at residues 67 to 71 is acidic; interacts with host PACS1 and PACS2; stabilizes the interaction of NEF/MHC-I with host AP1M1; necessary for MHC-I internalization; that stretch reads EEEEE. Residues 75–84 form an SH3-binding; interaction with Src family tyrosine kinases region; the sequence is PVRPQVPLRP. A PxxP; stabilizes the interaction of NEF/MHC-I with host AP1M1; necessary for MHC-I internalization motif is present at residues 78–81; the sequence is PQVP. The tract at residues 114-130 is mediates dimerization, Nef-PTE1 interaction; the sequence is DILDLWMYHTQGILPDW. The interval 154 to 186 is binding to ATP6V1H; the sequence is LSAEEVEEANEGDNNALLHPICQHGADDDHKEV. Residues 170–171 carry the Dileucine internalization motif; necessary for CD4 internalization motif; sequence LL. A Diacidic; necessary for CD4 internalization motif is present at residues 180–181; that stretch reads DD.

This sequence belongs to the lentivirus primate group Nef protein family. In terms of assembly, monomer; cytosolic form. Homodimer; membrane bound form. Interacts with Nef associated p21-activated kinase (PAK2); this interaction activates PAK2. Associates with the Nef-MHC-I-AP1 complex; this complex is required for MHC-I internalization. Interacts (via C-terminus) with host PI3-kinase. Interacts with host PACS1; this interaction seems to be weak. Interacts with host PACS2. Interacts with host LCK and MAPK3; these interactions inhibit the kinase activity of the latter. Interacts with host ATP6V1H; this interaction may play a role in CD4 endocytosis. Associates with the CD4-Nef-AP2 complex; this complex is required for CD4 internalization. Interacts with host AP2 subunit alpha and AP2 subunit sigma2. Interacts with TCR-zeta chain; this interaction up-regulates the Fas ligand (FasL) surface expression. Interacts with host HCK, LYN, and SRC; these interactions activate the Src family kinases. Interacts with MAP3K5; this interaction inhibits the Fas and TNFR-mediated death signals. Interacts with beta-COP and PTE1. Interacts with human RACK1; this increases Nef phosphorylation by PKC. Interacts with TP53; this interaction decreases the half-life of TP53, protecting the infected cell against p53-mediated apoptosis. The virion-associated Nef proteins are cleaved by the viral protease to release the soluble C-terminal core protein. Nef is probably cleaved concomitantly with viral structural proteins on maturation of virus particles. In terms of processing, myristoylated. Post-translationally, phosphorylated on serine residues, probably by host PKCdelta and theta.

The protein resides in the host cell membrane. Its subcellular location is the virion. The protein localises to the secreted. It is found in the host Golgi apparatus membrane. In terms of biological role, factor of infectivity and pathogenicity, required for optimal virus replication. Alters numerous pathways of T-lymphocyte function and down-regulates immunity surface molecules in order to evade host defense and increase viral infectivity. Alters the functionality of other immunity cells, like dendritic cells, monocytes/macrophages and NK cells. In infected CD4(+) T-lymphocytes, down-regulates the surface MHC-I, mature MHC-II, CD4, CD28, CCR5 and CXCR4 molecules. Mediates internalization and degradation of host CD4 through the interaction of with the cytoplasmic tail of CD4, the recruitment of AP-2 (clathrin adapter protein complex 2), internalization through clathrin coated pits, and subsequent transport to endosomes and lysosomes for degradation. Diverts host MHC-I molecules to the trans-Golgi network-associated endosomal compartments by an endocytic pathway to finally target them for degradation. MHC-I down-regulation may involve AP-1 (clathrin adapter protein complex 1) or possibly Src family kinase-ZAP70/Syk-PI3K cascade recruited by PACS2. In consequence infected cells are masked for immune recognition by cytotoxic T-lymphocytes. Decreasing the number of immune receptors also prevents reinfection by more HIV particles (superinfection). Down-regulates host SERINC3 and SERINC5 thereby excluding these proteins from the viral particles. Virion infectivity is drastically higher when SERINC3 or SERINC5 are excluded from the viral envelope, because these host antiviral proteins impair the membrane fusion event necessary for subsequent virion penetration. Functionally, bypasses host T-cell signaling by inducing a transcriptional program nearly identical to that of anti-CD3 cell activation. Interaction with TCR-zeta chain up-regulates the Fas ligand (FasL). Increasing surface FasL molecules and decreasing surface MHC-I molecules on infected CD4(+) cells send attacking cytotoxic CD8+ T-lymphocytes into apoptosis. Its function is as follows. Plays a role in optimizing the host cell environment for viral replication without causing cell death by apoptosis. Protects the infected cells from apoptosis in order to keep them alive until the next virus generation is ready to strike. Inhibits the Fas and TNFR-mediated death signals by blocking MAP3K5/ASK1. Decreases the half-life of TP53, protecting the infected cell against p53-mediated apoptosis. Inhibits the apoptotic signals regulated by the Bcl-2 family proteins through the formation of a Nef/PI3-kinase/PAK2 complex that leads to activation of PAK2 and induces phosphorylation of host BAD. In terms of biological role, extracellular Nef protein targets CD4(+) T-lymphocytes for apoptosis by interacting with CXCR4 surface receptors. The chain is Protein Nef from Human immunodeficiency virus type 1 group N (isolate YBF30) (HIV-1).